The chain runs to 27 residues: Pregnancy-associated glycoprotein 62 (27 aa).

The protein belongs to the peptidase A1 family. Post-translationally, glycosylated. As to expression, placenta.

In Capra hircus (Goat), this protein is Pregnancy-associated glycoprotein 62 (PAG62).